Reading from the N-terminus, the 84-residue chain is Sporulation-specific transcription factor SpoVIF (84 aa).

It is found in the cytoplasm. Transcription factor involved in spore coat assembly and spore resistance. Required for gene regulation during the latter stages of sporulation. Regulates the transcription of at least cgeA, cotG and cotS. May directly or indirectly control the function of the GerE protein. This Bacillus subtilis (strain 168) protein is Sporulation-specific transcription factor SpoVIF.